We begin with the raw amino-acid sequence, 512 residues long: Oryzalexin E synthase (512 aa).

Residues serine 6–leucine 26 traverse the membrane as a helical segment. Cysteine 452 contributes to the heme binding site.

Belongs to the cytochrome P450 family. Requires heme as cofactor.

It localises to the membrane. It catalyses the reaction ent-sandaracopimaradien-3beta-ol + reduced [NADPH--hemoprotein reductase] + O2 = oryzalexin E + oxidized [NADPH--hemoprotein reductase] + H2O + H(+). Enzyme of the diterpenoid metabolism involved in the biosynthesis of the oryzalexin class of phytoalexins. Can use ent-sandaracopimaradien and syn-stemodene as substrates, but no activity with syn-stemoden-19-oic acid. Hydroxylates 3-alpha-hydroxy-ent-sandaracopimaradiene at C-9-beta, resulting in a 3-alpha,9-beta-diol corresponding to oryzalexins E. The polypeptide is Oryzalexin E synthase (Oryza sativa subsp. japonica (Rice)).